The sequence spans 734 residues: Ribosomal RNA large subunit methyltransferase K/L (734 aa).

One can recognise a THUMP domain in the interval 43-154 (VGYRSCLWSR…RNQLTLSLDL (112 aa)).

It belongs to the methyltransferase superfamily. RlmKL family.

It localises to the cytoplasm. It carries out the reaction guanosine(2445) in 23S rRNA + S-adenosyl-L-methionine = N(2)-methylguanosine(2445) in 23S rRNA + S-adenosyl-L-homocysteine + H(+). The enzyme catalyses guanosine(2069) in 23S rRNA + S-adenosyl-L-methionine = N(2)-methylguanosine(2069) in 23S rRNA + S-adenosyl-L-homocysteine + H(+). In terms of biological role, specifically methylates the guanine in position 2445 (m2G2445) and the guanine in position 2069 (m7G2069) of 23S rRNA. The chain is Ribosomal RNA large subunit methyltransferase K/L from Hydrogenovibrio crunogenus (strain DSM 25203 / XCL-2) (Thiomicrospira crunogena).